We begin with the raw amino-acid sequence, 608 residues long: MGKPPRAMTPVEEVDLSAVRYQSPSLQAPHLTGFSLRAFVWLMESPLFGRLLTSVLKSQNNITRMLQDTVIPERPMYLPEYPPQEPEQGVLLLGDDRDPVDRVEEALHCLPPYDPSLRWPAGDKPPFLYWKIRDFAHAYRSGITTPSVVAEHIIAGVEEWSNKKPPMPMLVYFNADDLRKQAEASTKRFQQGNPISILDGIFIAIKDDIDCFPYPSKGATTFFDKIRSVEKDAVCVARLRKCGVLFIGKANMHELGLGVTGNNPNYGTARNPHSIDRYTGGSSSGPAALVSSGLCSAAIGTDGGGSVRIPSSLCGIIGLKTTYGRTDMTGALCDCGTVEVASPLAASVEDALLVYSAIAGSRPMDKLTLRPSPLCVPNLVSPDNNNILGSVKIGKYTEWFHDVSDRDISNTCEDALNLLCSSFGCQIEEIILPELEEMRTAHVVSIGTESFCDLNPHYRAGKRTEFTLDTRTSLALFGSFTSTDYVASQRIRRRIMYYHNEAFKKVDVIATPTTGITAPEIPQSSLKLGESNYVVSAYLMRFVIAGNLLGLPAITVPVGHDKQGLPIGLQLIGRPWGEASLLRVASAIEELCLQKRKRPSAFHDILNA.

Catalysis depends on charge relay system residues K206 and S282. Position 303–306 (303–306 (GGGS)) interacts with substrate. S306 serves as the catalytic Acyl-ester intermediate.

The protein belongs to the amidase family. In terms of assembly, forms homodimers.

The protein localises to the endoplasmic reticulum membrane. Its subcellular location is the cell membrane. It catalyses the reaction N-(9Z,12Z-octadecadienoyl)-ethanolamine + H2O = ethanolamine + (9Z,12Z)-octadecadienoate. It carries out the reaction N-hexadecanoylethanolamine + H2O = ethanolamine + hexadecanoate. The enzyme catalyses N-dodecanoylethanolamine + H2O = dodecanoate + ethanolamine. With respect to regulation, inhibited by methyl arachidonyl fluorophosphonate (MAFP). Its function is as follows. Catalyzes the hydrolysis of bioactive endogenous fatty acid amides to their corresponding acids. The hydrolysis of endogenous amidated lipids terminates their participation as lipid mediators in various signaling systems. Converts a wide range of N-acylethanolamines (NAEs) to their corresponding free fatty acids and ethanolamine. This is Fatty acid amide hydrolase from Oryza sativa subsp. japonica (Rice).